The sequence spans 1166 residues: Serine-aspartate repeat-containing protein E (1166 aa).

Residues 1 to 52 form the signal peptide; that stretch reads MINRDNKKAITKKGMISNRLNKFSIRKYTVGTASILVGTTLIFGLGNQEAKA. The YSIRK-G/S signaling motif motif lies at 23-34; the sequence is FSIRKYTVGTAS. The ligand binding A region stretch occupies residues 53–606; the sequence is AENTSTENAK…GDGTVKPEEK (554 aa). The tract at residues 54-253 is disordered; sequence ENTSTENAKQ…HSTKPVATAP (200 aa). Basic and acidic residues predominate over residues 61-75; it reads AKQDDATTSDNKEVV. A compositionally biased stretch (low complexity) spans 77-90; the sequence is ETENNSTTENNSTN. The span at 92–108 shows a compositional bias: basic and acidic residues; that stretch reads IKKETNTDSQPEAKKES. The span at 118 to 129 shows a compositional bias: polar residues; that stretch reads NNVTATTETKPQ. Residues 130 to 145 show a composition bias toward basic and acidic residues; that stretch reads NIEKENVKPSTDKTAT. A compositionally biased stretch (low complexity) spans 166-178; it reads TTKPSTSEPSTSE. Residues 179–212 are compositionally biased toward polar residues; it reads IQTKPTTPQESTNIENSQPQPTPSKVDNQVTDAT. The segment covering 221-246 has biased composition (basic and acidic residues); the sequence is SKEELKKNPEKLKELVRNDSNTDHST. 3 consecutive CNA-B domains span residues 607 to 719, 720 to 829, and 830 to 940; these read LYKI…YKEP, KYNL…YKTP, and KYSL…EEDT. The interval 904–1141 is disordered; sequence VTNTTEDDKD…TGSENNGSNN (238 aa). Composition is skewed to acidic residues over residues 908-918 and 935-1105; these read TEDDKDADGGE and YFEE…DSDS. An LPXTG sorting signal motif is present at residues 1129–1133; it reads LPETG. Residue T1132 is modified to Pentaglycyl murein peptidoglycan amidated threonine. A propeptide spans 1133–1166 (removed by sortase); sequence GSENNGSNNATLFGGLFAALGSLLLFGRRKKQNK.

The protein belongs to the serine-aspartate repeat-containing protein (SDr) family. Interacts with host complement factor H/CFAH (via C-terminus). Interacts with host complement regulator C4BPA.

It localises to the secreted. Its subcellular location is the cell wall. Its function is as follows. Cell surface-associated calcium-binding protein which plays an important role in adhesion and pathogenesis. Contributes to the resistance to killing by innate immune components in blood and thus attenuates bacterial clearance by interacting with host complement factor H/CFAH and modulating its activity. Also inhibits bacterial opsonization and killing by interacting with host complement regulator C4BPA and thus inhibiting classical complement pathway activation. This Staphylococcus aureus (strain COL) protein is Serine-aspartate repeat-containing protein E (sdrE).